The sequence spans 166 residues: 6,7-dimethyl-8-ribityllumazine synthase (166 aa).

5-amino-6-(D-ribitylamino)uracil is bound by residues Trp-31, 63–65 (SFE), and 85–87 (VII). 90–91 (GT) provides a ligand contact to (2S)-2-hydroxy-3-oxobutyl phosphate. The active-site Proton donor is the His-93. Phe-118 serves as a coordination point for 5-amino-6-(D-ribitylamino)uracil. A (2S)-2-hydroxy-3-oxobutyl phosphate-binding site is contributed by Arg-132.

Belongs to the DMRL synthase family.

The catalysed reaction is (2S)-2-hydroxy-3-oxobutyl phosphate + 5-amino-6-(D-ribitylamino)uracil = 6,7-dimethyl-8-(1-D-ribityl)lumazine + phosphate + 2 H2O + H(+). The protein operates within cofactor biosynthesis; riboflavin biosynthesis; riboflavin from 2-hydroxy-3-oxobutyl phosphate and 5-amino-6-(D-ribitylamino)uracil: step 1/2. In terms of biological role, catalyzes the formation of 6,7-dimethyl-8-ribityllumazine by condensation of 5-amino-6-(D-ribitylamino)uracil with 3,4-dihydroxy-2-butanone 4-phosphate. This is the penultimate step in the biosynthesis of riboflavin. This chain is 6,7-dimethyl-8-ribityllumazine synthase, found in Cutibacterium acnes (strain DSM 16379 / KPA171202) (Propionibacterium acnes).